The primary structure comprises 589 residues: MAVRSPFVVVMGHVDVGKTLLLDKIRGTSVAYREPGMITQHIGMSFVPWQAVEKYAGPLVDRLKLRGKIWIPGFLFIDTPGHAAFSNLRKRGGSVADLAILVVDITSGLEDQGVESLKLIQSRGVPFVIAANKLDRVYGWKSVENRPFLTAVEDQEWHAIATLEESIGKLVEQLSKLGVEADRYDRVRDFGRQVPIVPTSAVTGEGIADLLLVLAGVSQRFIPRDKLTVRPGPARGVVMEVKEERGLGVVADAILYDGVLKKGDTVVTAGIDGPRVAKVRMLVMPKPLEEMRDPEDRYMAVEEVKAAAGVRIVADGLEGVVAGAPLMAVRDPGEVQEAVKVVGEEISEIKIETDREGVIVRADTFGTLESTVLFLRQQGVPIRKADVGPPTHKDVVEAVLSRRKNPAYGVILAFNVKTPPEVEKEAMSSGVKIIRGEILYRIFDEYIKWSQEVKTKTVEQILSQMTRPGKIQILPGYVFRRSNPAIVGVKVLAGTIKPGVTLVKDGKEVGRVMQIQKSGKPVGEAAAGDEVAVSIQGDVMVGRQIKEGDVLYVYVPDEQARQWLFQYKQYLREDELKALEEFLKAGRRR.

In terms of domain architecture, tr-type G spans 3-224 (VRSPFVVVMG…AGVSQRFIPR (222 aa)). The interval 12-19 (GHVDVGKT) is G1. Residue 12–19 (GHVDVGKT) coordinates GTP. The G2 stretch occupies residues 37 to 41 (MITQH). Residues 78–81 (DTPG) form a G3 region. Residues 78–82 (DTPGH) and 132–135 (NKLD) each bind GTP. Positions 132–135 (NKLD) are G4. The interval 200-202 (SAV) is G5.

The protein belongs to the TRAFAC class translation factor GTPase superfamily. Classic translation factor GTPase family. IF-2 subfamily.

Its function is as follows. Function in general translation initiation by promoting the binding of the formylmethionine-tRNA to ribosomes. Seems to function along with eIF-2. In Pyrobaculum neutrophilum (strain DSM 2338 / JCM 9278 / NBRC 100436 / V24Sta) (Thermoproteus neutrophilus), this protein is Probable translation initiation factor IF-2.